The chain runs to 267 residues: Glucosamine-6-phosphate deaminase (267 aa).

Residue Asp72 is the Proton acceptor; for enolization step of the active site. The active-site For ring-opening step is the Asp141. His143 (proton acceptor; for ring-opening step) is an active-site residue. Glu148 (for ring-opening step) is an active-site residue.

This sequence belongs to the glucosamine/galactosamine-6-phosphate isomerase family. NagB subfamily. In terms of assembly, homohexamer.

It carries out the reaction alpha-D-glucosamine 6-phosphate + H2O = beta-D-fructose 6-phosphate + NH4(+). It participates in amino-sugar metabolism; N-acetylneuraminate degradation; D-fructose 6-phosphate from N-acetylneuraminate: step 5/5. Allosterically activated by N-acetylglucosamine 6-phosphate (GlcNAc6P). In terms of biological role, catalyzes the reversible isomerization-deamination of glucosamine 6-phosphate (GlcN6P) to form fructose 6-phosphate (Fru6P) and ammonium ion. The chain is Glucosamine-6-phosphate deaminase from Haemophilus ducreyi (strain 35000HP / ATCC 700724).